Reading from the N-terminus, the 112-residue chain is ATP synthase subunit c (112 aa).

Transmembrane regions (helical) follow at residues 36–56 and 81–101; these read FSVL…AIGM and MFIA…IALI.

It belongs to the ATPase C chain family. F-type ATPases have 2 components, F(1) - the catalytic core - and F(0) - the membrane proton channel. F(1) has five subunits: alpha(3), beta(3), gamma(1), delta(1), epsilon(1). F(0) has three main subunits: a(1), b(2) and c(10-14). The alpha and beta chains form an alternating ring which encloses part of the gamma chain. F(1) is attached to F(0) by a central stalk formed by the gamma and epsilon chains, while a peripheral stalk is formed by the delta and b chains.

Its subcellular location is the cell inner membrane. Functionally, f(1)F(0) ATP synthase produces ATP from ADP in the presence of a proton or sodium gradient. F-type ATPases consist of two structural domains, F(1) containing the extramembraneous catalytic core and F(0) containing the membrane proton channel, linked together by a central stalk and a peripheral stalk. During catalysis, ATP synthesis in the catalytic domain of F(1) is coupled via a rotary mechanism of the central stalk subunits to proton translocation. In terms of biological role, key component of the F(0) channel; it plays a direct role in translocation across the membrane. A homomeric c-ring of between 10-14 subunits forms the central stalk rotor element with the F(1) delta and epsilon subunits. This chain is ATP synthase subunit c, found in Campylobacter jejuni subsp. doylei (strain ATCC BAA-1458 / RM4099 / 269.97).